Here is a 549-residue protein sequence, read N- to C-terminus: Cation/acetate symporter ActP (549 aa).

Transmembrane regions (helical) follow at residues 33–53 (WQAIIMFLIFVVFTLGITYWA), 77–97 (LAIAGDYMSAASFLGISALVF), 103–123 (GLIYSLGFLVGWPIILFLIAE), 148–168 (ILSACGSLVVVALYLIAQMVG), 183–203 (IAVVLVGVLMMMYVLFGGMLA), 206–226 (WVQIIKAVLLLFGASFMAFMV), 262–282 (ISALSLGLGLMFGTAGLPHIL), 303–323 (GFMGYFYILTFIIGFGAIMLV), 355–375 (LFLGFISAVAFATILAVVAGL), 404–424 (VSKITVLILGVIAIILGVLFE), 428–448 (IAFMVGLAFAIAASCNFPIIL), 464–484 (GGWLGLITAVVLMILGPTIWV), and 493–513 (IFPYEYPALFSISVAFLGIWL).

It belongs to the sodium:solute symporter (SSF) (TC 2.A.21) family.

It is found in the cell inner membrane. Transports acetate. The sequence is that of Cation/acetate symporter ActP from Escherichia coli O1:K1 / APEC.